The sequence spans 491 residues: Probable Xaa-Pro aminopeptidase AFLA_084750 (491 aa).

Positions 271, 282, 419, and 458 each coordinate Mn(2+).

This sequence belongs to the peptidase M24B family. It depends on Mn(2+) as a cofactor.

It catalyses the reaction Release of any N-terminal amino acid, including proline, that is linked to proline, even from a dipeptide or tripeptide.. Functionally, catalyzes the removal of a penultimate prolyl residue from the N-termini of peptides. The sequence is that of Probable Xaa-Pro aminopeptidase AFLA_084750 from Aspergillus flavus (strain ATCC 200026 / FGSC A1120 / IAM 13836 / NRRL 3357 / JCM 12722 / SRRC 167).